We begin with the raw amino-acid sequence, 394 residues long: Methionine import ATP-binding protein MetN 2 (394 aa).

One can recognise an ABC transporter domain in the interval 39–278 (VSLEQVGKVF…PRHGATRALL (240 aa)). ATP is bound at residue 75–82 (GRSGAGKS).

The protein belongs to the ABC transporter superfamily. Methionine importer (TC 3.A.1.24) family. In terms of assembly, the complex is composed of two ATP-binding proteins (MetN), two transmembrane proteins (MetI) and a solute-binding protein (MetQ).

It localises to the cell inner membrane. The enzyme catalyses L-methionine(out) + ATP + H2O = L-methionine(in) + ADP + phosphate + H(+). The catalysed reaction is D-methionine(out) + ATP + H2O = D-methionine(in) + ADP + phosphate + H(+). Functionally, part of the ABC transporter complex MetNIQ involved in methionine import. Responsible for energy coupling to the transport system. This is Methionine import ATP-binding protein MetN 2 from Burkholderia cenocepacia (strain HI2424).